A 167-amino-acid polypeptide reads, in one-letter code: NADPH-dependent 7-cyano-7-deazaguanine reductase (167 aa).

Positions 1 to 24 (MTTRSQDQTRDLKVLGTGRLTSPE) are disordered. Cysteine 57 serves as the catalytic Thioimide intermediate. Aspartate 64 (proton donor) is an active-site residue. Residues 79-81 (VES) and 98-99 (ME) each bind substrate.

Belongs to the GTP cyclohydrolase I family. QueF type 1 subfamily.

The protein resides in the cytoplasm. It catalyses the reaction 7-aminomethyl-7-carbaguanine + 2 NADP(+) = 7-cyano-7-deazaguanine + 2 NADPH + 3 H(+). Its pathway is tRNA modification; tRNA-queuosine biosynthesis. In terms of biological role, catalyzes the NADPH-dependent reduction of 7-cyano-7-deazaguanine (preQ0) to 7-aminomethyl-7-deazaguanine (preQ1). This chain is NADPH-dependent 7-cyano-7-deazaguanine reductase, found in Desulfovibrio desulfuricans (strain ATCC 27774 / DSM 6949 / MB).